Consider the following 359-residue polypeptide: Protein disulfide-isomerase tigA (359 aa).

The first 19 residues, 1–19, serve as a signal peptide directing secretion; that stretch reads MVRLSNLVSCLGLASAVTA. Thioredoxin domains lie at 20 to 129 and 131 to 250; these read AVVD…EKTG and KPRG…EKTG. Catalysis depends on nucleophile residues Cys49, Cys52, Cys169, and Cys172. Cystine bridges form between Cys49/Cys52 and Cys169/Cys172. The Prevents secretion from ER motif lies at 356-359; that stretch reads KDEL.

Belongs to the protein disulfide isomerase family.

It localises to the endoplasmic reticulum lumen. It carries out the reaction Catalyzes the rearrangement of -S-S- bonds in proteins.. This is Protein disulfide-isomerase tigA (tigA) from Aspergillus niger.